The following is a 358-amino-acid chain: MELGEERYPIYVGAGLMAQLGALVRRHLPETRRALLVTDANVAPLYGEAARAALEQAGITTARVTVPAGEASKSLSQAYSLYSSCVRAELDRTSAVVALGGGVVGDLAGFVAATYLRGIPLVQVPTTLLAQVDSSIGGKTGVDLPQGKNLVGAFHQPSLVVADVETLKSLPRRELSAGMAEVVKHGVIRDEEFLKYVEVQVGNVLAGDPAVLERVVAESCRIKAEVVAADPREKGLRAILNFGHTVGHALEAAIGFRWLHGECVAVGMVAAAHIARHSGIAQEGRLELRLTRLLERLDLPTTLPEGMDPKDLEPFLRRDKKIKSGVIHWVMPVRPGEVVVTPDVSPDAIRWGLEALRR.

NAD(+) is bound by residues 102–106 (GVVGD), 126–127 (TT), lysine 139, and lysine 148. Zn(2+)-binding residues include glutamate 181, histidine 244, and histidine 260.

The protein belongs to the sugar phosphate cyclases superfamily. Dehydroquinate synthase family. Co(2+) is required as a cofactor. Requires Zn(2+) as cofactor. It depends on NAD(+) as a cofactor.

Its subcellular location is the cytoplasm. The enzyme catalyses 7-phospho-2-dehydro-3-deoxy-D-arabino-heptonate = 3-dehydroquinate + phosphate. It participates in metabolic intermediate biosynthesis; chorismate biosynthesis; chorismate from D-erythrose 4-phosphate and phosphoenolpyruvate: step 2/7. Its function is as follows. Catalyzes the conversion of 3-deoxy-D-arabino-heptulosonate 7-phosphate (DAHP) to dehydroquinate (DHQ). The chain is 3-dehydroquinate synthase from Symbiobacterium thermophilum (strain DSM 24528 / JCM 14929 / IAM 14863 / T).